The sequence spans 246 residues: MQWIDDGLVIGLRKHGETGVVLELMTPEHGRHLGLVHGGRSRRMQPMLQPGNTLRATWRARLDGALGAYAVEPLTLNASRLMDSGLALYGVAHLSALLRLLPERDPHPALYEAAQILIAHLDDPEIAPALMVRFELALLAGLGFGLDLSHCAATGANDALVYVSPKSGRAVSASAGEPFRDRLLPLPPFLRDRDQPGSGWRTPDTHDVREGFTLTGYFLDQHVWRPRAQDTPEERARFVALGTGQS.

It belongs to the RecO family.

Involved in DNA repair and RecF pathway recombination. In Methylorubrum extorquens (strain PA1) (Methylobacterium extorquens), this protein is DNA repair protein RecO.